Consider the following 95-residue polypeptide: Small ribosomal subunit protein uS19 (95 aa).

It belongs to the universal ribosomal protein uS19 family.

Functionally, protein S19 forms a complex with S13 that binds strongly to the 16S ribosomal RNA. This Thermodesulfovibrio yellowstonii (strain ATCC 51303 / DSM 11347 / YP87) protein is Small ribosomal subunit protein uS19.